Here is a 230-residue protein sequence, read N- to C-terminus: N-(5'-phosphoribosyl)anthranilate isomerase (230 aa).

It belongs to the TrpF family.

It catalyses the reaction N-(5-phospho-beta-D-ribosyl)anthranilate = 1-(2-carboxyphenylamino)-1-deoxy-D-ribulose 5-phosphate. It participates in amino-acid biosynthesis; L-tryptophan biosynthesis; L-tryptophan from chorismate: step 3/5. The polypeptide is N-(5'-phosphoribosyl)anthranilate isomerase (Thermosynechococcus vestitus (strain NIES-2133 / IAM M-273 / BP-1)).